Here is a 434-residue protein sequence, read N- to C-terminus: Putative magnesium transporter MRS2-D (434 aa).

Disordered regions lie at residues 126-171 (AASP…DGEA) and 279-311 (EASE…AGGG). Over residues 279–291 (EASELEDHSSRDE) the composition is skewed to basic and acidic residues. The next 2 helical transmembrane spans lie at 367 to 387 (GILL…TGVF) and 405 to 425 (FPCA…AALL).

This sequence belongs to the CorA metal ion transporter (MIT) (TC 1.A.35.5) family.

Its subcellular location is the membrane. Functionally, putative magnesium transporter. This is Putative magnesium transporter MRS2-D (MRS2-D) from Oryza sativa subsp. japonica (Rice).